Reading from the N-terminus, the 281-residue chain is uncharacterized protein (281 aa).

The chain crosses the membrane as a helical span at residues 5–27; that stretch reads AYVTVIYGNNIYLTGALVLGYTL.

The protein localises to the membrane. This is an uncharacterized protein from Acanthamoeba polyphaga mimivirus (APMV).